The primary structure comprises 573 residues: ATP-dependent RNA helicase RhlB (573 aa).

Residues 9 to 37 carry the Q motif motif; the sequence is LTFSSFDLHPALVAGLESAGFTRCTPIQA. Positions 40–220 constitute a Helicase ATP-binding domain; the sequence is LPVALPGGDV…YEHMNEPEKL (181 aa). An ATP-binding site is contributed by 53–60; it reads AQTGTGKT. A DEAD box motif is present at residues 166-169; it reads DEAD. The Helicase C-terminal domain occupies 231–393; it reads RVRQRIYFPS…PVTTELLTPL (163 aa). The span at 391–400 shows a compositional bias: low complexity; it reads TPLPRTPRAT. The disordered stretch occupies residues 391 to 559; it reads TPLPRTPRAT…AKPSGSPSLL (169 aa). Acidic residues predominate over residues 402 to 411; that stretch reads EGEEVDDDAG. Positions 419–432 are enriched in basic and acidic residues; the sequence is REAREQRAADEARR. Positions 435 to 449 are enriched in gly residues; the sequence is GRSGPGGASRSGSGG. Basic and acidic residues predominate over residues 450–461; sequence GRRDGAGADGKP. Residues 476-499 are compositionally biased toward low complexity; the sequence is PAAAPSETPVVVAAAAETPAVTAA. Residues 505-514 are compositionally biased toward basic residues; it reads PRKRRRRRNG. Composition is skewed to low complexity over residues 516-528 and 541-559; these read PVEG…ASTP and VVAK…PSLL.

The protein belongs to the DEAD box helicase family. RhlB subfamily. In terms of assembly, component of the RNA degradosome, which is a multiprotein complex involved in RNA processing and mRNA degradation.

It localises to the cytoplasm. The catalysed reaction is ATP + H2O = ADP + phosphate + H(+). Functionally, DEAD-box RNA helicase involved in RNA degradation. Has RNA-dependent ATPase activity and unwinds double-stranded RNA. This chain is ATP-dependent RNA helicase RhlB, found in Xanthomonas campestris pv. campestris (strain B100).